The following is a 652-amino-acid chain: Ubiquitin-like modifier-activating enzyme ATG7 (652 aa).

The GXGXXG motif signature appears at 335–340; the sequence is GAGTLG. Cysteine 519 acts as the Glycyl thioester intermediate in catalysis.

It belongs to the ATG7 family. Homodimer.

It localises to the cytoplasm. It is found in the preautophagosomal structure. Functionally, E1-like activating enzyme involved in the 2 ubiquitin-like systems required for cytoplasm to vacuole transport (Cvt) and autophagy. Activates ATG12 for its conjugation with ATG5 and ATG8 for its conjugation with phosphatidylethanolamine. Both systems are needed for the ATG8 association to Cvt vesicles and autophagosomes membranes. Autophagy is essential for maintenance of amino acid levels and protein synthesis under nitrogen starvation. Required for selective autophagic degradation of the nucleus (nucleophagy) as well as for mitophagy which contributes to regulate mitochondrial quantity and quality by eliminating the mitochondria to a basal level to fulfill cellular energy requirements and preventing excess ROS production. Plays a role in the regulation of filamentous growth and chronological longevity. The chain is Ubiquitin-like modifier-activating enzyme ATG7 (ATG7) from Debaryomyces hansenii (strain ATCC 36239 / CBS 767 / BCRC 21394 / JCM 1990 / NBRC 0083 / IGC 2968) (Yeast).